A 619-amino-acid chain; its full sequence is Zinc finger and BTB domain-containing protein 7C (619 aa).

The BTB domain maps to Cys34–Ala101. Residues Pro129–His218 are disordered. Over residues Gly133 to Asp173 the composition is skewed to acidic residues. Residues Lys191 to Pro208 show a composition bias toward basic and acidic residues. 3 consecutive C2H2-type zinc fingers follow at residues Gln364–His386, Tyr392–His414, and Tyr420–His442. The segment at Tyr448–Arg478 adopts a C2H2-type 4; degenerate zinc-finger fold.

As to expression, detected in normal cervical keratinocytes, and in some cervical carcinoma cell lines.

May be a tumor suppressor gene. The protein is Zinc finger and BTB domain-containing protein 7C (ZBTB7C) of Homo sapiens (Human).